Consider the following 118-residue polypeptide: Small ribosomal subunit protein uS13 (118 aa).

Residues 94-118 (GLPLRGQRTKTNARTRKGPRKPIRK) form a disordered region.

This sequence belongs to the universal ribosomal protein uS13 family. In terms of assembly, part of the 30S ribosomal subunit. Forms a loose heterodimer with protein S19. Forms two bridges to the 50S subunit in the 70S ribosome.

Located at the top of the head of the 30S subunit, it contacts several helices of the 16S rRNA. In the 70S ribosome it contacts the 23S rRNA (bridge B1a) and protein L5 of the 50S subunit (bridge B1b), connecting the 2 subunits; these bridges are implicated in subunit movement. Contacts the tRNAs in the A and P-sites. The chain is Small ribosomal subunit protein uS13 from Alcanivorax borkumensis (strain ATCC 700651 / DSM 11573 / NCIMB 13689 / SK2).